A 281-amino-acid polypeptide reads, in one-letter code: Radiation response metalloprotease IrrE (281 aa).

H82 provides a ligand contact to Zn(2+). The active site involves E83. Residues H86 and E113 each contribute to the Zn(2+) site. The segment at 262 to 281 (LPAGRSEPDADKPEAPGDQS) is disordered. The span at 267-281 (SEPDADKPEAPGDQS) shows a compositional bias: basic and acidic residues.

In terms of assembly, interacts with DdrOC.

Its activity is regulated as follows. Protease activity is inhibited by EDTA. Functionally, plays a central regulatory role in DNA repair and protection pathways in response to radiation stress. Acts as a site-specific metalloprotease that cleaves and inactivates the repressor proteins DdrOC and DdrOP3, resulting in induced expression of genes required for DNA repair and cell survival after exposure to radiation. This chain is Radiation response metalloprotease IrrE, found in Deinococcus deserti (strain DSM 17065 / CIP 109153 / LMG 22923 / VCD115).